Here is a 163-residue protein sequence, read N- to C-terminus: Lipoprotein signal peptidase (163 aa).

3 consecutive transmembrane segments (helical) span residues 7 to 27, 64 to 84, and 99 to 119; these read LSFL…KYLV, WQKY…VYLL, and ALII…GFVV. Active-site residues include D120 and D138. The helical transmembrane segment at 133-153 threads the bilayer; sequence VFNVADIAICVGVGLLILDSF.

The protein belongs to the peptidase A8 family.

The protein localises to the cell inner membrane. The enzyme catalyses Release of signal peptides from bacterial membrane prolipoproteins. Hydrolyzes -Xaa-Yaa-Zaa-|-(S,diacylglyceryl)Cys-, in which Xaa is hydrophobic (preferably Leu), and Yaa (Ala or Ser) and Zaa (Gly or Ala) have small, neutral side chains.. It functions in the pathway protein modification; lipoprotein biosynthesis (signal peptide cleavage). This protein specifically catalyzes the removal of signal peptides from prolipoproteins. The chain is Lipoprotein signal peptidase from Actinobacillus succinogenes (strain ATCC 55618 / DSM 22257 / CCUG 43843 / 130Z).